The following is a 622-amino-acid chain: Carbon monoxide dehydrogenase (622 aa).

[4Fe-4S] cluster is bound by residues cysteine 40, cysteine 49, cysteine 52, cysteine 57, and cysteine 68. Histidine 256, cysteine 334, cysteine 442, cysteine 473, and cysteine 514 together coordinate [Ni-4Fe-5S] cluster.

The protein belongs to the Ni-containing carbon monoxide dehydrogenase family. As to quaternary structure, homodimer. [4Fe-4S] cluster is required as a cofactor. [Ni-4Fe-5S] cluster serves as cofactor.

The enzyme catalyses CO + 2 oxidized [2Fe-2S]-[ferredoxin] + H2O = 2 reduced [2Fe-2S]-[ferredoxin] + CO2 + 2 H(+). Its function is as follows. CODH oxidizes carbon monoxide coupled, via CooF, to the reduction of a hydrogen cation by a hydrogenase (possibly CooH). The sequence is that of Carbon monoxide dehydrogenase (cooS) from Archaeoglobus fulgidus (strain ATCC 49558 / DSM 4304 / JCM 9628 / NBRC 100126 / VC-16).